We begin with the raw amino-acid sequence, 867 residues long: Elongation factor 2 (867 aa).

The tr-type G domain maps to 17-368 (HNIRNLSVVA…MIVLHLPSPV (352 aa)). Residue 26-33 (AHVDHGKS) participates in GTP binding. Residues T57 and T59 each carry the phosphothreonine modification. GTP-binding positions include 176–179 (NKLD) and 231–233 (SGL). H723 is modified (diphthamide).

Belongs to the TRAFAC class translation factor GTPase superfamily. Classic translation factor GTPase family. EF-G/EF-2 subfamily. In terms of processing, phosphorylation by EF-2 kinase completely inactivates EF-2.

Its subcellular location is the cytoplasm. The catalysed reaction is GTP + H2O = GDP + phosphate + H(+). Functionally, catalyzes the GTP-dependent ribosomal translocation step during translation elongation. During this step, the ribosome changes from the pre-translocational (PRE) to the post-translocational (POST) state as the newly formed A-site-bound peptidyl-tRNA and P-site-bound deacylated tRNA move to the P and E sites, respectively. Catalyzes the coordinated movement of the two tRNA molecules, the mRNA and conformational changes in the ribosome. The sequence is that of Elongation factor 2 from Blastocystis hominis.